The chain runs to 330 residues: Ferredoxin--NADP reductase (330 aa).

7 residues coordinate FAD: Glu-35, Gln-43, Tyr-48, Val-90, Phe-123, Asp-285, and Thr-326.

The protein belongs to the ferredoxin--NADP reductase type 2 family. In terms of assembly, homodimer. FAD serves as cofactor.

It carries out the reaction 2 reduced [2Fe-2S]-[ferredoxin] + NADP(+) + H(+) = 2 oxidized [2Fe-2S]-[ferredoxin] + NADPH. This Streptococcus pyogenes serotype M28 (strain MGAS6180) protein is Ferredoxin--NADP reductase.